The following is a 144-amino-acid chain: Large ribosomal subunit protein uL15 (144 aa).

A disordered region spans residues 1-60; that stretch reads MKMNTLKPAEGSKQSPKRLGRGIGSGLGKTGGRGHKGQTSRSGGTIRPGFEGGQQPLQRR. Gly residues predominate over residues 21-31; sequence RGIGSGLGKTG.

The protein belongs to the universal ribosomal protein uL15 family. As to quaternary structure, part of the 50S ribosomal subunit.

In terms of biological role, binds to the 23S rRNA. The polypeptide is Large ribosomal subunit protein uL15 (Hahella chejuensis (strain KCTC 2396)).